The chain runs to 447 residues: Glutamate--tRNA ligase 1 (447 aa).

The 'HIGH' region signature appears at 10–20 (PSPTGMLHVGN). A 'KMSKS' region motif is present at residues 240–244 (KISKR). Lys243 is a binding site for ATP.

This sequence belongs to the class-I aminoacyl-tRNA synthetase family. Glutamate--tRNA ligase type 1 subfamily. As to quaternary structure, monomer.

It localises to the cytoplasm. It carries out the reaction tRNA(Glu) + L-glutamate + ATP = L-glutamyl-tRNA(Glu) + AMP + diphosphate. Catalyzes the attachment of glutamate to tRNA(Glu) in a two-step reaction: glutamate is first activated by ATP to form Glu-AMP and then transferred to the acceptor end of tRNA(Glu). This Rickettsia rickettsii (strain Sheila Smith) protein is Glutamate--tRNA ligase 1.